The sequence spans 470 residues: E3 SUMO-protein ligase EGR2 (470 aa).

The span at 126–141 (PPASTTASSSVTSASP) shows a compositional bias: low complexity. Disordered stretches follow at residues 126 to 153 (PPASTTASSSVTSASPNPLATGPLGVCT), 159 to 178 (PELDHLYSPPPPPPPYSGCT), and 184 to 211 (DPSAFLSPPPTTSTSSLAYQPPPSYPSP). An N6-acetyllysine; by EP300 modification is found at lysine 247. A disordered region spans residues 275–344 (GPSAGVTGPG…RPYPCPAEGC (70 aa)). The segment covering 281-291 (TGPGASGGGEG) has biased composition (gly residues). 3 C2H2-type zinc fingers span residues 337–361 (YPCPAEGCDRRFSRSDELTRHIRIH), 367–389 (FQCRICMRNFSRSDHLTTHIRTH), and 395–417 (FACDYCGRKFARSDERKRHTKIH). The interval 408-470 (DERKRHTKIH…ASCTSRTRTP (63 aa)) is disordered. Residues 412 to 422 (RHTKIHLRQKE) show a composition bias toward basic residues. Over residues 426-439 (SAPSSSASAQSSAS) the composition is skewed to low complexity. Residues 440–450 (GPGGSQAGGSL) are compositionally biased toward gly residues.

This sequence belongs to the EGR C2H2-type zinc-finger protein family. In terms of assembly, interacts with HCFC1. Interacts with WWP2. Interacts with UBC9. Interacts with CITED1. Interacts (via phosphorylated form) with SFN. Post-translationally, ubiquitinated by WWP2 leading to proteasomal degradation. In terms of processing, acetylated at Lys-247. May be deacetylated by HDAC6, HDAC10 or SIRT1.

It localises to the nucleus. It functions in the pathway protein modification; protein sumoylation. In terms of biological role, sequence-specific DNA-binding transcription factor. Plays a role in hindbrain segmentation by regulating the expression of a subset of homeobox containing genes and in Schwann cell myelination by regulating the expression of genes involved in the formation and maintenance of myelin. Binds to two EGR2-consensus sites EGR2A (5'-CTGTAGGAG-3') and EGR2B (5'-ATGTAGGTG-3') in the HOXB3 enhancer and promotes HOXB3 transcriptional activation. Binds to specific DNA sites located in the promoter region of HOXA4, HOXB2 and ERBB2. Regulates hindbrain segmentation by controlling the expression of Hox genes, such as HOXA4, HOXB3 and HOXB2, and thereby specifying odd and even rhombomeres. Promotes the expression of HOXB3 in the rhombomere r5 in the hindbrain. Regulates myelination in the peripheral nervous system after birth, possibly by regulating the expression of myelin proteins, such as MPZ, and by promoting the differentiation of Schwann cells. Involved in the development of the jaw openener musculature, probably by playing a role in its innervation through trigeminal motor neurons. May play a role in adipogenesis, possibly by regulating the expression of CEBPB. Functionally, E3 SUMO-protein ligase helping SUMO1 conjugation to its coregulators NAB1 and NAB2, whose sumoylation down-regulates EGR2 transcriptional activity. The chain is E3 SUMO-protein ligase EGR2 (Egr2) from Rattus norvegicus (Rat).